The primary structure comprises 306 residues: Serine/threonine-protein phosphatase PP2A-1 catalytic subunit (306 aa).

4 residues coordinate Mn(2+): aspartate 54, histidine 56, aspartate 82, and asparagine 114. The active-site Proton donor is the histidine 115. Mn(2+)-binding residues include histidine 164 and histidine 238. Leucine methyl ester is present on leucine 306.

This sequence belongs to the PPP phosphatase family. PP-2A subfamily. In terms of assembly, PP2A consists of a common heterodimeric core enzyme, composed of a 36 kDa catalytic subunit (subunit C) and a 65 kDa constant regulatory subunit (subunit A), that associates with a variety of regulatory subunits such as subunits B (the R2/B/PR55/B55, R3/B''/PR72/PR130/PR59 and R5/B'/B56 families). Interacts with TAF12B. Interacts with SRK2E/OST1. Interacts with TAP46. Mn(2+) serves as cofactor. In terms of processing, reversibly methyl esterified on Leu-306 by leucine carboxyl methyltransferase 1 (LCMT1) and pectin methylesterase 1 (PME1). Carboxyl methylation influences the affinity of the catalytic subunit for the different regulatory subunits, thereby modulating the PP2A holoenzyme's substrate specificity, enzyme activity and cellular localization. Phosphorylation of either threonine (by autophosphorylation-activated protein kinase) or tyrosine results in inactivation of the phosphatase. Auto-dephosphorylation has been suggested as a mechanism for reactivation.

It localises to the cytoplasm. The enzyme catalyses O-phospho-L-seryl-[protein] + H2O = L-seryl-[protein] + phosphate. The catalysed reaction is O-phospho-L-threonyl-[protein] + H2O = L-threonyl-[protein] + phosphate. This chain is Serine/threonine-protein phosphatase PP2A-1 catalytic subunit, found in Arabidopsis thaliana (Mouse-ear cress).